A 521-amino-acid chain; its full sequence is C-22 sterol desaturase erg5 (521 aa).

A helical transmembrane segment spans residues 30 to 50 (AVLNGFTFWKALATLFFAAVI).

Belongs to the cytochrome P450 family. Heme is required as a cofactor.

The protein localises to the endoplasmic reticulum membrane. The enzyme catalyses 5-dehydroepisterol + NADPH + O2 + H(+) = ergosta-5,7,22,24(28)-tetraen-3beta-ol + NADP(+) + 2 H2O. It participates in steroid metabolism; ergosterol biosynthesis. In terms of biological role, C-22 sterol desaturase; part of the third module of ergosterol biosynthesis pathway that includes the late steps of the pathway. Erg5 converts 5-dehydroepisterol into ergosta-5,7,22,24(28)-tetraen-3beta-ol by forming the C-22(23) double bond in the sterol side chain. The third module or late pathway involves the ergosterol synthesis itself through consecutive reactions that mainly occur in the endoplasmic reticulum (ER) membrane. Firstly, the squalene synthase erg9 catalyzes the condensation of 2 farnesyl pyrophosphate moieties to form squalene, which is the precursor of all steroids. Squalene synthase is crucial for balancing the incorporation of farnesyl diphosphate (FPP) into sterol and nonsterol isoprene synthesis. Secondly, squalene is converted into lanosterol by the consecutive action of the squalene epoxidase erg1 and the lanosterol synthase erg7. Then, the delta(24)-sterol C-methyltransferase erg6 methylates lanosterol at C-24 to produce eburicol. Eburicol is the substrate of the sterol 14-alpha demethylase encoded by cyp51A and cyp51B, to yield 4,4,24-trimethyl ergosta-8,14,24(28)-trienol. The C-14 reductase erg24 then reduces the C14=C15 double bond which leads to 4,4-dimethylfecosterol. A sequence of further demethylations at C-4, involving the C-4 demethylation complex containing the C-4 methylsterol oxidases erg25A or erg25B, the sterol-4-alpha-carboxylate 3-dehydrogenase erg26 and the 3-keto-steroid reductase erg27, leads to the production of fecosterol via 4-methylfecosterol. The C-8 sterol isomerase erg2 then catalyzes the reaction which results in unsaturation at C-7 in the B ring of sterols and thus converts fecosterol to episterol. The sterol-C5-desaturase erg3B then catalyzes the introduction of a C-5 double bond in the B ring to produce 5-dehydroepisterol. The 2 other sterol-C5-desaturases, erg3A and erg3C, seem to be less important in ergosterol biosynthesis. The C-22 sterol desaturase erg5 further converts 5-dehydroepisterol into ergosta-5,7,22,24(28)-tetraen-3beta-ol by forming the C-22(23) double bond in the sterol side chain. Finally, ergosta-5,7,22,24(28)-tetraen-3beta-ol is substrate of the C-24(28) sterol reductases erg4A and erg4B to produce ergosterol. Possible alternative sterol biosynthetic pathways might exist from fecosterol to ergosterol, depending on the activities of the erg3 isoforms. The protein is C-22 sterol desaturase erg5 of Aspergillus fumigatus (strain ATCC MYA-4609 / CBS 101355 / FGSC A1100 / Af293) (Neosartorya fumigata).